Here is a 633-residue protein sequence, read N- to C-terminus: Hyphal wall protein 1 (633 aa).

An N-terminal signal peptide occupies residues Met-1 to Gly-27. Disordered stretches follow at residues Ser-40–Thr-306 and Cys-411–Ile-569. Positions Asp-42–Cys-114 are enriched in low complexity. Residues Glu-46–Gln-58 form a 1; approximate repeat. Residues Glu-46–Asp-187 are 14 X 10 AA tandem repeats of [EVIQ]-P-[CDT]-D-[YNW]-P-[PQ]-[QI]-[QP]-[QDN]. The stretch at Glu-59 to Gln-69 is one 2; approximate repeat. The 3; approximate repeat unit spans residues Glu-70–Gln-81. 9 consecutive repeat copies span residues Glu-82–Gln-91, Glu-92–Gln-101, Glu-102–Gln-111, Glu-112–Asp-121, Val-122–Asp-131, Val-132–Asp-141, Ile-142–Asp-151, Ile-152–Asp-161, and Gln-162–Asn-171. The span at Asp-115–Asn-171 shows a compositional bias: pro residues. Residues Ile-172 to Asn-179 form a 13; truncated repeat. Low complexity-rich tracts occupy residues Ile-172–Asp-183 and Thr-193–Thr-306. The 14; truncated repeat unit spans residues Ile-180 to Asp-187. N-linked (GlcNAc...) asparagine glycans are attached at residues Asn-240 and Asn-285. The span at Thr-414–Glu-425 shows a compositional bias: polar residues. The segment covering Glu-507 to Ser-549 has biased composition (low complexity). N-linked (GlcNAc...) asparagine glycosylation occurs at Asn-600. The GPI-anchor amidated glycine moiety is linked to residue Gly-612. The propeptide at Ala-613–Ile-633 is removed in mature form.

The protein belongs to the HWP1 family. The GPI-anchor is attached to the protein in the endoplasmic reticulum and serves to target the protein to the cell surface. There, the glucosamine-inositol phospholipid moiety is cleaved off and the GPI-modified mannoprotein is covalently attached via its lipidless GPI glycan remnant to the 1,6-beta-glucan of the outer cell wall layer. In terms of processing, N- and O-glycosylated.

Its subcellular location is the secreted. It is found in the cell wall. The protein resides in the membrane. Functionally, major hyphal cell wall protein which plays a role of adhesin and is required for mating, normal hyphal development, cell-to-cell adhesive functions necessary for biofilm integrity, attachment to host, and virulence. Promotes interactions with host and bacterial molecules, thus leading to effective colonization within polymicrobial communities. Plays a crucial role in gastrointestinal colonization, in mucosal symptomatic and asymptomatic infections, in vaginitis, as well as in lethal oroesophageal candidiasis, caused by the combined action of fungal virulence factors and host inflammatory responses when protective immunity is absent. This Candida albicans (strain WO-1) (Yeast) protein is Hyphal wall protein 1.